The primary structure comprises 342 residues: Trace amine-associated receptor 8 (342 aa).

Residues 1–31 (MTSNFSQPVVQLCYEDVNGSCIETPYSPGSR) lie on the Extracellular side of the membrane. 2 N-linked (GlcNAc...) asparagine glycosylation sites follow: asparagine 4 and asparagine 18. 2 disulfides stabilise this stretch: cysteine 21–cysteine 185 and cysteine 104–cysteine 189. The chain crosses the membrane as a helical span at residues 32–52 (VILYTAFSFGSLLAVFGNLLV). Topologically, residues 53-67 (MTSVLHFKQLHSPTN) are cytoplasmic. Residues 68-88 (FLIASLACADFLVGVTVMLFS) traverse the membrane as a helical segment. Topologically, residues 89 to 111 (MVRTVESCWYFGAKFCTLHSCCD) are extracellular. A helical transmembrane segment spans residues 112 to 132 (VAFCYSSVLHLCFICIDRYIV). At 133-146 (VTDPLVYATKFTVS) the chain is on the cytoplasmic side. A helical transmembrane segment spans residues 147-167 (VSGICISVSWILPLTYSGAVF). Topologically, residues 168–195 (YTGVNDDGLEELVSALNCVGGCQIIVSQ) are extracellular. Residues 196–216 (GWVLIDFLLFFIPTLVMIILY) traverse the membrane as a helical segment. At 217-258 (SKIFLIAKQQAIKIETTSSKVESSSESYKIRVAKRERKAAKT) the chain is on the cytoplasmic side. Residues 259–279 (LGVTVLAFVISWLPYTVDILI) form a helical membrane-spanning segment. A topological domain (extracellular) is located at residue aspartate 280. Residues 281 to 301 (AFMGFLTPAYIYEICCWSAYY) form a helical membrane-spanning segment. Over 302-342 (NSAMNPLIYALFYPWFRKAIKLILSGDVLKASSSTISLFLE) the chain is Cytoplasmic.

The protein belongs to the G-protein coupled receptor 1 family. In terms of tissue distribution, expressed in kidney and amygdala. Not expressed in other tissues or brain regions tested.

It localises to the cell membrane. Its function is as follows. Olfactory receptor specific for trace amines. Trace amine compounds are enriched in animal body fluids and act on trace amine-associated receptors (TAARs) to elicit both intraspecific and interspecific innate behaviors. Ligand-binding causes a conformation change that triggers signaling via G alpha proteins, possibly G(i)/G(o) G alpha proteins. The protein is Trace amine-associated receptor 8 (TAAR8) of Homo sapiens (Human).